The following is a 264-amino-acid chain: Tryptophan synthase alpha chain (264 aa).

Active-site proton acceptor residues include E49 and D60.

This sequence belongs to the TrpA family. Tetramer of two alpha and two beta chains.

It catalyses the reaction (1S,2R)-1-C-(indol-3-yl)glycerol 3-phosphate + L-serine = D-glyceraldehyde 3-phosphate + L-tryptophan + H2O. It participates in amino-acid biosynthesis; L-tryptophan biosynthesis; L-tryptophan from chorismate: step 5/5. The alpha subunit is responsible for the aldol cleavage of indoleglycerol phosphate to indole and glyceraldehyde 3-phosphate. In Synechocystis sp. (strain ATCC 27184 / PCC 6803 / Kazusa), this protein is Tryptophan synthase alpha chain.